A 506-amino-acid polypeptide reads, in one-letter code: uncharacterized protein (506 aa).

Disordered stretches follow at residues 104 to 144 (PNSS…ATSS) and 397 to 456 (QQQK…DQLP). Positions 130–144 (ESSPTLSSSSLATSS) are enriched in low complexity. Residues 405–443 (IKDEDKNEKENKSENEEKEKEKEKEKEKEKEKEKEKEKE) show a composition bias toward basic and acidic residues. Residues 405–455 (IKDEDKNEKENKSENEEKEKEKEKEKEKEKEKEKEKEKENEEGEEDNGDQL) are a coiled coil.

This is an uncharacterized protein from Dictyostelium discoideum (Social amoeba).